Consider the following 367-residue polypeptide: Heparan sulfate glucosamine 3-O-sulfotransferase 2 (367 aa).

Residues methionine 1–arginine 19 lie on the Cytoplasmic side of the membrane. A helical; Signal-anchor for type II membrane protein membrane pass occupies residues leucine 20–cysteine 39. At cysteine 40 to glutamate 367 the chain is on the lumenal side. Residues leucine 66–proline 115 are disordered. Residues cysteine 73 to proline 83 show a composition bias toward pro residues. Positions serine 84–proline 96 are enriched in low complexity. Asparagine 102 is a glycosylation site (N-linked (GlcNAc...) asparagine). Lysine 124–arginine 128 contributes to the 3'-phosphoadenylyl sulfate binding site. Substrate-binding positions include glutamate 146–arginine 152 and lysine 177–serine 180. Asparagine 193 carries an N-linked (GlcNAc...) asparagine glycan. 3'-phosphoadenylyl sulfate-binding residues include arginine 205 and serine 213. An N-linked (GlcNAc...) asparagine glycan is attached at asparagine 235. Tryptophan 245–asparagine 246 serves as a coordination point for substrate. A glycan (N-linked (GlcNAc...) asparagine) is linked at asparagine 306. A disulfide bridge links cysteine 313 with cysteine 325. Position 330–334 (lysine 330–histidine 334) interacts with 3'-phosphoadenylyl sulfate.

It belongs to the sulfotransferase 1 family.

Its subcellular location is the golgi apparatus membrane. It carries out the reaction alpha-D-glucosaminyl-[heparan sulfate](n) + 3'-phosphoadenylyl sulfate = 3-sulfo-alpha-D-glucosaminyl-[heparan sulfate](n) + adenosine 3',5'-bisphosphate + H(+). Its function is as follows. Sulfotransferase that utilizes 3'-phospho-5'-adenylyl sulfate (PAPS) to catalyze the transfer of a sulfo group to an N-unsubstituted glucosamine linked to a 2-O-sulfo iduronic acid unit on heparan sulfate. Catalyzes the O-sulfation of glucosamine in GlcA2S-GlcNS. Unlike HS3ST1/3-OST-1, does not convert non-anticoagulant heparan sulfate to anticoagulant heparan sulfate. The sequence is that of Heparan sulfate glucosamine 3-O-sulfotransferase 2 (Hs3st2) from Mus musculus (Mouse).